Consider the following 186-residue polypeptide: Peptidyl-tRNA hydrolase (186 aa).

TRNA is bound at residue Tyr-17. The Proton acceptor role is filled by His-22. Residues Tyr-64 and Asn-66 each coordinate tRNA.

It belongs to the PTH family. As to quaternary structure, monomer.

The protein localises to the cytoplasm. It carries out the reaction an N-acyl-L-alpha-aminoacyl-tRNA + H2O = an N-acyl-L-amino acid + a tRNA + H(+). Hydrolyzes ribosome-free peptidyl-tRNAs (with 1 or more amino acids incorporated), which drop off the ribosome during protein synthesis, or as a result of ribosome stalling. In terms of biological role, catalyzes the release of premature peptidyl moieties from peptidyl-tRNA molecules trapped in stalled 50S ribosomal subunits, and thus maintains levels of free tRNAs and 50S ribosomes. The chain is Peptidyl-tRNA hydrolase from Methylacidiphilum infernorum (isolate V4) (Methylokorus infernorum (strain V4)).